The following is a 158-amino-acid chain: MQGRLSAWLVKHELVHRSLGFDYQGIETLQIKPEDWYSIAVISYVYGYNYLRSQCAYDIAPGGLLASVYHLTRIQYGVDQPEEVCIKVFAPRRNPRIPSVFWIWKSADFQERESYDMLGISYDNHPRLKRILMPESWIGWPLRKDYIAPNFYEIQDAH.

The protein belongs to the complex I 30 kDa subunit family. As to quaternary structure, NDH is composed of at least 16 different subunits, 5 of which are encoded in the nucleus.

It localises to the plastid. Its subcellular location is the chloroplast thylakoid membrane. It carries out the reaction a plastoquinone + NADH + (n+1) H(+)(in) = a plastoquinol + NAD(+) + n H(+)(out). It catalyses the reaction a plastoquinone + NADPH + (n+1) H(+)(in) = a plastoquinol + NADP(+) + n H(+)(out). In terms of biological role, NDH shuttles electrons from NAD(P)H:plastoquinone, via FMN and iron-sulfur (Fe-S) centers, to quinones in the photosynthetic chain and possibly in a chloroplast respiratory chain. The immediate electron acceptor for the enzyme in this species is believed to be plastoquinone. Couples the redox reaction to proton translocation, and thus conserves the redox energy in a proton gradient. The sequence is that of NAD(P)H-quinone oxidoreductase subunit J, chloroplastic from Chloranthus spicatus (Chulantree).